The chain runs to 427 residues: Serine--tRNA ligase (427 aa).

231 to 233 (TAE) contributes to the L-serine binding site. 262–264 (RSE) is an ATP binding site. Residue Glu285 coordinates L-serine. 349 to 352 (EISS) contacts ATP. Ser385 lines the L-serine pocket.

This sequence belongs to the class-II aminoacyl-tRNA synthetase family. Type-1 seryl-tRNA synthetase subfamily. Homodimer. The tRNA molecule binds across the dimer.

It localises to the cytoplasm. It catalyses the reaction tRNA(Ser) + L-serine + ATP = L-seryl-tRNA(Ser) + AMP + diphosphate + H(+). It carries out the reaction tRNA(Sec) + L-serine + ATP = L-seryl-tRNA(Sec) + AMP + diphosphate + H(+). The protein operates within aminoacyl-tRNA biosynthesis; selenocysteinyl-tRNA(Sec) biosynthesis; L-seryl-tRNA(Sec) from L-serine and tRNA(Sec): step 1/1. Functionally, catalyzes the attachment of serine to tRNA(Ser). Is also able to aminoacylate tRNA(Sec) with serine, to form the misacylated tRNA L-seryl-tRNA(Sec), which will be further converted into selenocysteinyl-tRNA(Sec). This chain is Serine--tRNA ligase, found in Hahella chejuensis (strain KCTC 2396).